We begin with the raw amino-acid sequence, 229 residues long: Enolase-phosphatase E1 (229 aa).

Over residues 208–218 (DTQSTHRQVSS) the composition is skewed to polar residues. The tract at residues 208 to 229 (DTQSTHRQVSSFDDIHPEQIPT) is disordered. A compositionally biased stretch (basic and acidic residues) spans 220-229 (DDIHPEQIPT).

This sequence belongs to the HAD-like hydrolase superfamily. MasA/MtnC family. In terms of assembly, monomer. Requires Mg(2+) as cofactor.

It carries out the reaction 5-methylsulfanyl-2,3-dioxopentyl phosphate + H2O = 1,2-dihydroxy-5-(methylsulfanyl)pent-1-en-3-one + phosphate. It participates in amino-acid biosynthesis; L-methionine biosynthesis via salvage pathway; L-methionine from S-methyl-5-thio-alpha-D-ribose 1-phosphate: step 3/6. Its pathway is amino-acid biosynthesis; L-methionine biosynthesis via salvage pathway; L-methionine from S-methyl-5-thio-alpha-D-ribose 1-phosphate: step 4/6. Its function is as follows. Bifunctional enzyme that catalyzes the enolization of 2,3-diketo-5-methylthiopentyl-1-phosphate (DK-MTP-1-P) into the intermediate 2-hydroxy-3-keto-5-methylthiopentenyl-1-phosphate (HK-MTPenyl-1-P), which is then dephosphorylated to form the acireductone 1,2-dihydroxy-3-keto-5-methylthiopentene (DHK-MTPene). The polypeptide is Enolase-phosphatase E1 (Cronobacter sakazakii (strain ATCC BAA-894) (Enterobacter sakazakii)).